The primary structure comprises 105 residues: Large ribosomal subunit protein uL24 (105 aa).

The protein belongs to the universal ribosomal protein uL24 family. Part of the 50S ribosomal subunit.

In terms of biological role, one of two assembly initiator proteins, it binds directly to the 5'-end of the 23S rRNA, where it nucleates assembly of the 50S subunit. One of the proteins that surrounds the polypeptide exit tunnel on the outside of the subunit. The polypeptide is Large ribosomal subunit protein uL24 (Aromatoleum aromaticum (strain DSM 19018 / LMG 30748 / EbN1) (Azoarcus sp. (strain EbN1))).